Reading from the N-terminus, the 191-residue chain is Ribonuclease M5 (191 aa).

One can recognise a Toprim domain in the interval 8 to 91; the sequence is HEFIVVEGRD…AFINRQDALP (84 aa). Residues Glu-14, Asp-60, and Asp-62 each coordinate Mg(2+).

Belongs to the ribonuclease M5 family. Mg(2+) serves as cofactor.

Its subcellular location is the cytoplasm. The enzyme catalyses Endonucleolytic cleavage of RNA, removing 21 and 42 nucleotides, respectively, from the 5'- and 3'-termini of a 5S-rRNA precursor.. Functionally, required for correct processing of both the 5' and 3' ends of 5S rRNA precursor. Cleaves both sides of a double-stranded region yielding mature 5S rRNA in one step. The chain is Ribonuclease M5 from Listeria monocytogenes serovar 1/2a (strain ATCC BAA-679 / EGD-e).